The sequence spans 231 residues: Red fluorescent protein eqFP611 (231 aa).

Residues 63-65 (MYG) constitute a cross-link (2-iminomethyl-5-imidazolinone (Met-Gly)). Tyr-64 is subject to (E)-2,3-didehydrotyrosine.

This sequence belongs to the GFP family. Monomer. In terms of processing, contains a chromophore consisting of modified amino acid residues. The chromophore is formed by autocatalytic backbone condensation between Xaa-N and Gly-(N+2), oxidation of Tyr-(N+1) to didehydrotyrosine, and formation of a double bond to the alpha-amino nitrogen of residue Xaa-N. Maturation of the chromophore requires nothing other than molecular oxygen.

In terms of biological role, pigment protein. This Entacmaea quadricolor (Bubble-tip anemone) protein is Red fluorescent protein eqFP611.